A 491-amino-acid chain; its full sequence is Phosphoethanolamine N-methyltransferase 1 (491 aa).

N-acetylalanine is present on A2. S-adenosyl-L-homocysteine is bound by residues G61, R66, D82, D107, V108, and N126. S159, S164, G165, R169, and Y176 together coordinate phosphocholine. N-methylethanolamine phosphate is bound by residues Q245–Y246 and Y254. Position 254 (Y254) interacts with phosphocholine. S-adenosyl-L-homocysteine-binding residues include V263, S264, G290, D312, D338, C339, and R355. The phosphocholine site is built by Y386, Y400, R404, Y406, and K472. N-methylethanolamine phosphate is bound by residues Y386, Y400, R404–Y406, and K472.

Belongs to the class I-like SAM-binding methyltransferase superfamily. PEAMT family. As to expression, highly expressed in the meristem and elongation zones of the root. Expressed in differentiated root epidermal cells. Highly expressed in leaf vasculature.

It is found in the cytoplasm. The enzyme catalyses phosphoethanolamine + S-adenosyl-L-methionine = N-methylethanolamine phosphate + S-adenosyl-L-homocysteine + H(+). It catalyses the reaction N-methylethanolamine phosphate + S-adenosyl-L-methionine = N,N-dimethylethanolamine phosphate + S-adenosyl-L-homocysteine + H(+). The catalysed reaction is N,N-dimethylethanolamine phosphate + S-adenosyl-L-methionine = phosphocholine + S-adenosyl-L-homocysteine + H(+). It functions in the pathway phospholipid metabolism; phosphatidylcholine biosynthesis; phosphocholine from phosphoethanolamine: step 1/1. Involved in phosphocholine biosynthesis. Catalyzes the N-methylation of phosphoethanolamine, phosphomonomethylethanolamine and phosphodimethylethanolamine, the three methylation steps required to convert phosphoethanolamine to phosphocholine (PC). Required for root system development and epidermal cell integrity through its role in choline and phospholipid metabolism. In association with NMT3, regulates PC homeostasis, phase transition at the shoot apex, coordinated organ development, and fertility. In association with NMT3, involved in phosphatidylcholine biosynthesis and vascular development. In association with NMT2, involved in the production of phosphatidylcholine in roots, essential for root development. In association with NMT2 produce phosphocholine mainly for leaf growth maintenance. Contributes to the regulation of overall root zonation dynamics through reactive oxygen species (ROS) and auxin-regulated cell differentiation. Participates in root development of primary root elongation under salt stress conditions by balancing reactive oxygen species (ROS) production and distribution through abscisic acid (ABA) signaling. The sequence is that of Phosphoethanolamine N-methyltransferase 1 from Arabidopsis thaliana (Mouse-ear cress).